The following is a 566-amino-acid chain: DNA helicase/primase (566 aa).

The Zn(2+) site is built by Cys-17, Cys-20, Cys-36, and Cys-39. The C4-like; zinc ribbon fold zinc finger occupies 17–39 (CDNCGSSDGNSLFSDGHTFCYVC). Residues 151–238 (KKIVVTEGEI…RVAVLPCKDA (88 aa)) enclose the Toprim domain. Glu-157, Asp-207, and Asp-237 together coordinate Mg(2+). Residues 281-548 (SEESVGLLFS…TGWLEPSSYS (268 aa)) form the SF4 helicase domain. 312–319 (SGSGMGKS) lines the ATP pocket. Residues 543-566 (EPSSYSGEEESHSESTDWSNDTDF) form a disordered region. The tract at residues 550-566 (EEESHSESTDWSNDTDF) is binding to viral DNA polymerase.

It belongs to the Teseptimavirus DNA helicase/primase family. Homohexamer. Assembles as a hexamer onto linear or circular ssDNA in the presence of ATP or dTTP. Present in a mixture of heptamers and hexamers in the absence of DNA. Interacts (via C-terminus) with the viral DNA polymerase that is bound to DNA; this interaction is essential to initiate leading-strand DNA synthesis. The priming complex consists of 2 DNA polymerases and 1 helicase-primase hexamer that assemble on the DNA template. Interacts with the single-stranded DNA-binding protein. Part of the replicase complex that includes the DNA polymerase, thioredoxin, the primase/helicase and the single-stranded DNA binding protein. The cofactor is Mg(2+).

It carries out the reaction ATP + H2O = ADP + phosphate + H(+). In terms of biological role, ATP-dependent DNA helicase and primase essential for viral DNA replication and recombination. The helicase moves 5' -&gt; 3' on the lagging strand template, unwinding the DNA duplex ahead of the leading strand polymerase at the replication fork and generating ssDNA for both leading and lagging strand synthesis. ATP or dTTP hydrolysis propels each helicase domain to translocate 2 nt per step sequentially along DNA. Mediates strand transfer when a joint molecule is available and participates in recombinational DNA repair through its role in strand exchange. Primase activity synthesizes short RNA primers at the sequence 5'-GTC-3' on the lagging strand that the polymerase elongates using dNTPs and providing the primase is still present. This is DNA helicase/primase from Escherichia phage T7 (Bacteriophage T7).